A 293-amino-acid chain; its full sequence is Elongation factor Ts (293 aa).

The interval 81–84 is involved in Mg(2+) ion dislocation from EF-Tu; the sequence is TDFV.

The protein belongs to the EF-Ts family.

The protein resides in the cytoplasm. In terms of biological role, associates with the EF-Tu.GDP complex and induces the exchange of GDP to GTP. It remains bound to the aminoacyl-tRNA.EF-Tu.GTP complex up to the GTP hydrolysis stage on the ribosome. This chain is Elongation factor Ts, found in Teredinibacter turnerae (strain ATCC 39867 / T7901).